Consider the following 502-residue polypeptide: Probable cytosol aminopeptidase (502 aa).

Positions 269 and 274 each coordinate Mn(2+). The active site involves lysine 281. Mn(2+)-binding residues include aspartate 292, aspartate 351, and glutamate 353. Arginine 355 is a catalytic residue.

Belongs to the peptidase M17 family. Mn(2+) serves as cofactor.

The protein localises to the cytoplasm. The catalysed reaction is Release of an N-terminal amino acid, Xaa-|-Yaa-, in which Xaa is preferably Leu, but may be other amino acids including Pro although not Arg or Lys, and Yaa may be Pro. Amino acid amides and methyl esters are also readily hydrolyzed, but rates on arylamides are exceedingly low.. It carries out the reaction Release of an N-terminal amino acid, preferentially leucine, but not glutamic or aspartic acids.. Its function is as follows. Presumably involved in the processing and regular turnover of intracellular proteins. Catalyzes the removal of unsubstituted N-terminal amino acids from various peptides. The protein is Probable cytosol aminopeptidase of Shewanella piezotolerans (strain WP3 / JCM 13877).